A 249-amino-acid polypeptide reads, in one-letter code: Mediator of RNA polymerase II transcription subunit 8 (249 aa).

Positions 1–26 (MQREEKQLDMLLEAVLNRLNDLKHSI) form a coiled coil. 2 stretches are compositionally biased toward polar residues: residues 215–224 (SPMSAVSPSG) and 235–249 (IKTN…HPYR). Residues 215-249 (SPMSAVSPSGNAPMGKMPSGIKTNIKSANQVHPYR) are disordered.

The protein belongs to the Mediator complex subunit 8 family. As to quaternary structure, component of the Mediator complex.

It localises to the nucleus. Its function is as follows. Component of the Mediator complex, a coactivator involved in the regulated transcription of nearly all RNA polymerase II-dependent genes. Mediator functions as a bridge to convey information from gene-specific regulatory proteins to the basal RNA polymerase II transcription machinery. Mediator is recruited to promoters by direct interactions with regulatory proteins and serves as a scaffold for the assembly of a functional preinitiation complex with RNA polymerase II and the general transcription factors. The protein is Mediator of RNA polymerase II transcription subunit 8 (MED8) of Anopheles gambiae (African malaria mosquito).